Consider the following 205-residue polypeptide: GTP cyclohydrolase-2 (205 aa).

Residue 49–53 participates in GTP binding; that stretch reads RLHSE. Zn(2+) contacts are provided by Cys54, Cys65, and Cys67. GTP is bound by residues Gln70, 92-94, and Thr114; that span reads EGR. Residue Asp126 is the Proton acceptor of the active site. Residue Arg128 is the Nucleophile of the active site. The GTP site is built by Thr149 and Lys154.

Belongs to the GTP cyclohydrolase II family. The cofactor is Zn(2+).

The enzyme catalyses GTP + 4 H2O = 2,5-diamino-6-hydroxy-4-(5-phosphoribosylamino)-pyrimidine + formate + 2 phosphate + 3 H(+). The protein operates within cofactor biosynthesis; riboflavin biosynthesis; 5-amino-6-(D-ribitylamino)uracil from GTP: step 1/4. Catalyzes the conversion of GTP to 2,5-diamino-6-ribosylamino-4(3H)-pyrimidinone 5'-phosphate (DARP), formate and pyrophosphate. This is GTP cyclohydrolase-2 from Pseudomonas putida (strain W619).